The sequence spans 338 residues: Lipoate-protein ligase A (338 aa).

The BPL/LPL catalytic domain maps to 29 to 216 (PATQRVLFLW…AFFAHYGERV (188 aa)). Residues arginine 71, 76–79 (GAVF), and lysine 134 each bind ATP. (R)-lipoate is bound at residue lysine 134.

It belongs to the LplA family. As to quaternary structure, monomer.

The protein localises to the cytoplasm. The enzyme catalyses L-lysyl-[lipoyl-carrier protein] + (R)-lipoate + ATP = N(6)-[(R)-lipoyl]-L-lysyl-[lipoyl-carrier protein] + AMP + diphosphate + H(+). The protein operates within protein modification; protein lipoylation via exogenous pathway; protein N(6)-(lipoyl)lysine from lipoate: step 1/2. Its pathway is protein modification; protein lipoylation via exogenous pathway; protein N(6)-(lipoyl)lysine from lipoate: step 2/2. Functionally, catalyzes both the ATP-dependent activation of exogenously supplied lipoate to lipoyl-AMP and the transfer of the activated lipoyl onto the lipoyl domains of lipoate-dependent enzymes. The polypeptide is Lipoate-protein ligase A (Salmonella paratyphi B (strain ATCC BAA-1250 / SPB7)).